An 858-amino-acid polypeptide reads, in one-letter code: Translation initiation factor IF-2 (858 aa).

The interval 49-271 (TTTVTHPKSQ…NKPAPVRKDK (223 aa)) is disordered. The span at 80–226 (NQQQSNSRHQ…RFGGSLNSNN (147 aa)) shows a compositional bias: low complexity. Basic residues predominate over residues 239 to 256 (NRRRNNRNNKSRNNKNQR). The tr-type G domain occupies 359–528 (PRAPVVTVMG…LLQSEVLELT (170 aa)). Residues 368–375 (GHVDHGKT) form a G1 region. Residue 368–375 (GHVDHGKT) coordinates GTP. Residues 393 to 397 (GITQA) are G2. The interval 414–417 (DTPG) is G3. GTP is bound by residues 414–418 (DTPGH) and 468–471 (NKID). Residues 468-471 (NKID) form a G4 region. Residues 504 to 506 (SAK) form a G5 region.

This sequence belongs to the TRAFAC class translation factor GTPase superfamily. Classic translation factor GTPase family. IF-2 subfamily.

The protein resides in the cytoplasm. Functionally, one of the essential components for the initiation of protein synthesis. Protects formylmethionyl-tRNA from spontaneous hydrolysis and promotes its binding to the 30S ribosomal subunits. Also involved in the hydrolysis of GTP during the formation of the 70S ribosomal complex. The polypeptide is Translation initiation factor IF-2 (Lactiplantibacillus plantarum (strain ATCC BAA-793 / NCIMB 8826 / WCFS1) (Lactobacillus plantarum)).